We begin with the raw amino-acid sequence, 191 residues long: dTTP/UTP pyrophosphatase (191 aa).

Asp75 (proton acceptor) is an active-site residue.

This sequence belongs to the Maf family. YhdE subfamily. A divalent metal cation serves as cofactor.

Its subcellular location is the cytoplasm. It catalyses the reaction dTTP + H2O = dTMP + diphosphate + H(+). It carries out the reaction UTP + H2O = UMP + diphosphate + H(+). Nucleoside triphosphate pyrophosphatase that hydrolyzes dTTP and UTP. May have a dual role in cell division arrest and in preventing the incorporation of modified nucleotides into cellular nucleic acids. In Aliivibrio fischeri (strain ATCC 700601 / ES114) (Vibrio fischeri), this protein is dTTP/UTP pyrophosphatase.